We begin with the raw amino-acid sequence, 251 residues long: Hydroxyacylglutathione hydrolase (251 aa).

The Zn(2+) site is built by histidine 53, histidine 55, aspartate 57, histidine 58, histidine 110, aspartate 127, and histidine 165.

The protein belongs to the metallo-beta-lactamase superfamily. Glyoxalase II family. In terms of assembly, monomer. It depends on Zn(2+) as a cofactor.

It carries out the reaction an S-(2-hydroxyacyl)glutathione + H2O = a 2-hydroxy carboxylate + glutathione + H(+). Its pathway is secondary metabolite metabolism; methylglyoxal degradation; (R)-lactate from methylglyoxal: step 2/2. Its function is as follows. Thiolesterase that catalyzes the hydrolysis of S-D-lactoyl-glutathione to form glutathione and D-lactic acid. This chain is Hydroxyacylglutathione hydrolase, found in Pectobacterium carotovorum subsp. carotovorum (strain PC1).